Here is a 597-residue protein sequence, read N- to C-terminus: tRNA uridine 5-carboxymethylaminomethyl modification enzyme MnmG (597 aa).

10 to 15 serves as a coordination point for FAD; sequence GGGHAG. 267-281 is a binding site for NAD(+); sequence GPRYCPSIEDKVVRF.

Belongs to the MnmG family. In terms of assembly, homodimer. Heterotetramer of two MnmE and two MnmG subunits. Requires FAD as cofactor.

It localises to the cytoplasm. Its function is as follows. NAD-binding protein involved in the addition of a carboxymethylaminomethyl (cmnm) group at the wobble position (U34) of certain tRNAs, forming tRNA-cmnm(5)s(2)U34. This is tRNA uridine 5-carboxymethylaminomethyl modification enzyme MnmG from Thermus thermophilus (strain ATCC 27634 / DSM 579 / HB8).